The sequence spans 335 residues: MVLMGPHSALRLLPLKTQAIRFVLLLLLSVLILAVALLVTNARMPDPKVVRPLPDIGFEVFPKVGWLEHLTDVCIFILNFLSLLVVFKLYLLHRQNEGLDELQPFSCCPLIGKIIFGVWDSGRQSGIEKRDAHLIAWIRYFTTYFIVLLFRAIVVVMTSYPATDNHCQNPMKITNPVKNVIMTLVTFGSGSIHCGDLMFSGHTVSITLSLLVQWIYGSMLHWVFRPASVLLVLLSFYSIIASRSHYTDDILVSFYITVTTFLVLRHSPDGAPWQLQLLIGWWPCCVSNEETEDSDRNPTFVAVEVFLPHGDYQCAERISEEKTTVGPACGNFGHW.

Residues 1 to 21 (MVLMGPHSALRLLPLKTQAIR) lie on the Cytoplasmic side of the membrane. Residues 22–42 (FVLLLLLSVLILAVALLVTNA) traverse the membrane as a helical segment. The Extracellular portion of the chain corresponds to 43–72 (RMPDPKVVRPLPDIGFEVFPKVGWLEHLTD). The chain crosses the membrane as a helical span at residues 73 to 93 (VCIFILNFLSLLVVFKLYLLH). Residues 94-98 (RQNEG) are Cytoplasmic-facing. A helical transmembrane segment spans residues 99–119 (LDELQPFSCCPLIGKIIFGVW). Residues 120-139 (DSGRQSGIEKRDAHLIAWIR) are Extracellular-facing. A helical membrane pass occupies residues 140–160 (YFTTYFIVLLFRAIVVVMTSY). Residues 161 to 179 (PATDNHCQNPMKITNPVKN) lie on the Cytoplasmic side of the membrane. A helical membrane pass occupies residues 180–200 (VIMTLVTFGSGSIHCGDLMFS). The Extracellular portion of the chain corresponds to 201 to 203 (GHT). His202 is an active-site residue. A helical transmembrane segment spans residues 204–224 (VSITLSLLVQWIYGSMLHWVF). At 225-335 (RPASVLLVLL…GPACGNFGHW (111 aa)) the chain is on the cytoplasmic side. Catalysis depends on residues His245 and Asp249.

This sequence belongs to the sphingomyelin synthase family.

It is found in the membrane. Bidirectional lipid inositolphosphotransferase capable of converting phosphatidylinositol (PI) and ceramide to inositol-phosphorylceramide (IPC) and diacylglycerol (DAG) and vice versa. Direction is dependent on the relative concentrations of DAG and ceramide as phosphoinositol acceptors. Essential for viability of the pathogenic bloodstream stage of this human protozoan parasite and, consequently, can be considered as potential drug target. The chain is Phosphatidylinositol:ceramide inositolphosphotransferase from Trypanosoma cruzi (strain CL Brener).